Here is a 300-residue protein sequence, read N- to C-terminus: Protoheme IX farnesyltransferase (300 aa).

The next 9 helical transmembrane spans lie at 28–48 (VVAL…PTIL), 50–70 (VQPL…AAAL), 100–120 (ALIF…VFTN), 122–142 (LTAW…TAYL), 149–169 (NIVI…TAVT), 176–196 (ALLL…ALAI), 222–242 (CILL…LVGM), 243–263 (SGPL…YKAW), and 280–300 (FSIY…YLWA).

The protein belongs to the UbiA prenyltransferase family. Protoheme IX farnesyltransferase subfamily.

It is found in the cell inner membrane. The enzyme catalyses heme b + (2E,6E)-farnesyl diphosphate + H2O = Fe(II)-heme o + diphosphate. Its pathway is porphyrin-containing compound metabolism; heme O biosynthesis; heme O from protoheme: step 1/1. Converts heme B (protoheme IX) to heme O by substitution of the vinyl group on carbon 2 of heme B porphyrin ring with a hydroxyethyl farnesyl side group. The protein is Protoheme IX farnesyltransferase of Shewanella oneidensis (strain ATCC 700550 / JCM 31522 / CIP 106686 / LMG 19005 / NCIMB 14063 / MR-1).